Consider the following 445-residue polypeptide: 3-phosphoshikimate 1-carboxyvinyltransferase (445 aa).

3-phosphoshikimate is bound by residues Lys28, Ser29, and Arg33. Lys28 lines the phosphoenolpyruvate pocket. Phosphoenolpyruvate-binding residues include Gly101 and Arg129. 3-phosphoshikimate-binding residues include Ser175, Gln177, Asp328, and Lys355. Phosphoenolpyruvate is bound at residue Gln177. The active-site Proton acceptor is Asp328. Residues Arg359 and Arg402 each contribute to the phosphoenolpyruvate site.

It belongs to the EPSP synthase family. Monomer.

It is found in the cytoplasm. The enzyme catalyses 3-phosphoshikimate + phosphoenolpyruvate = 5-O-(1-carboxyvinyl)-3-phosphoshikimate + phosphate. It functions in the pathway metabolic intermediate biosynthesis; chorismate biosynthesis; chorismate from D-erythrose 4-phosphate and phosphoenolpyruvate: step 6/7. Its function is as follows. Catalyzes the transfer of the enolpyruvyl moiety of phosphoenolpyruvate (PEP) to the 5-hydroxyl of shikimate-3-phosphate (S3P) to produce enolpyruvyl shikimate-3-phosphate and inorganic phosphate. This is 3-phosphoshikimate 1-carboxyvinyltransferase from Rhodopseudomonas palustris (strain BisA53).